The following is a 327-amino-acid chain: MAKASLDTLPRSVPQKRTAGDLAKDLFVLSRFNRYNPLLATFSGVWATLLAGASKRIDHPGSISTEYVFKQALLVFVGGYIFCGAGMVWNDWIDLNIDKQVARTKERPLAAGRITNTEALIWMMAQYIASWYLIAYTLDGHNVLEAMIPVTISTILYPFGKRSFFKTIYFYPQYFLGFTLGYPSVIGWLAIKGQDQSLQDNIMESFALGTTVFTWVLYLNTAYSYQDIEGDKKANVNSVYFLAGSYIHYFLVFLAALVLGATSLQLKAQASQWLWGSWLSVWGYSFASQLSRFSAKDPSSGGTLHKENFALGVWTVFACAVELLLKS.

A run of 8 helical transmembrane segments spans residues 35-54, 73-93, 118-138, 140-160, 171-191, 202-222, 239-259, and 307-327; these read YNPL…AGAS, LLVF…NDWI, EALI…AYTL, GHNV…YPFG, YPQY…WLAI, IMES…LNTA, VYFL…ALVL, and ENFA…LLKS.

The protein belongs to the UbiA prenyltransferase family. Mg(2+) is required as a cofactor.

The protein localises to the membrane. It functions in the pathway secondary metabolite biosynthesis; terpenoid biosynthesis. Olyprenyl transferase; part of the cluster that mediates the biosynthesis of shearones, diterpenoid pyrones (DPs) which are structurally diverse meroterpenoids consisting of a diterpene linked by a pyrone, and which may exhibit a range of bioactivities. Within the pathway, esdpC takes part to the biosynthesis of the molecular scaffold by catalyzing the C-3 geranylgeranylation reaction of the alpha-pyrone produced by esdpA. The molecular scaffold is commonly biosynthesized by a series of enzymes including the non-reducing polyketide synthase (NR-PKS) esdpA that generates an alpha-pyrone; the prenyltransferase esdpC that attaches a geranylgeranyl pyrophosphate (GGPP) produced by the GGPP synthase (GGPPS) esdpD onto the pyrone unit; the FAD-dependent monooxygenase esdpE that converts an olefin on the diterpene unit into an epoxide; and the terpene cyclase esdpB that catalyzes the cyclization reactions to give the molecular backbone shearone A. In the modification steps, esdpF oxidizes the hydroxy group to a ketone at C-3 and esdpG then attaches hydroxy groups at both C-11 and C-12. After that, esdpI hydroxylates at C-20 and esdpH hydroxylates at C-6'. The ether bridge is generated by nucleophilic attack of the hydroxy group at C-20 to the carbonyl carbon at C-3. EsdpH can also functions prior to esdpI. The different combinations of these modification enzymes lead to the production of diverse shearone derivatives, shearone I being the end product of the pathway. The alpha-ketoglutarate-dependent dioxygenase esdpJ seems not to be involved in this pathway. This is Polyprenyl transferase esdpC from Penicillium shearii (Eupenicillium shearii).